We begin with the raw amino-acid sequence, 327 residues long: DNA-directed RNA polymerase subunit alpha (327 aa).

The alpha N-terminal domain (alpha-NTD) stretch occupies residues 1 to 233 (MQGSVTEFLK…EQLEAFVDLR (233 aa)). The interval 247-327 (FDPVLLRPVD…NWPPLGFIDK (81 aa)) is alpha C-terminal domain (alpha-CTD).

The protein belongs to the RNA polymerase alpha chain family. In terms of assembly, homodimer. The RNAP catalytic core consists of 2 alpha, 1 beta, 1 beta' and 1 omega subunit. When a sigma factor is associated with the core the holoenzyme is formed, which can initiate transcription.

The enzyme catalyses RNA(n) + a ribonucleoside 5'-triphosphate = RNA(n+1) + diphosphate. DNA-dependent RNA polymerase catalyzes the transcription of DNA into RNA using the four ribonucleoside triphosphates as substrates. In Baumannia cicadellinicola subsp. Homalodisca coagulata, this protein is DNA-directed RNA polymerase subunit alpha.